Here is a 278-residue protein sequence, read N- to C-terminus: Probable cytochrome c oxidase subunit 3 (278 aa).

6 helical membrane-spanning segments follow: residues 21–41, 46–66, 89–109, 174–194, 212–232, and 256–276; these read PWPI…ISSM, FNMY…YSWW, IGMV…FASF, CVTA…MQVY, FYLA…FLIV, and AWYW…VYIL.

Belongs to the cytochrome c oxidase subunit 3 family.

Its subcellular location is the cell membrane. It catalyses the reaction 4 Fe(II)-[cytochrome c] + O2 + 8 H(+)(in) = 4 Fe(III)-[cytochrome c] + 2 H2O + 4 H(+)(out). The chain is Probable cytochrome c oxidase subunit 3 (ctaE) from Rickettsia prowazekii (strain Madrid E).